The following is a 124-amino-acid chain: uncharacterized protein (124 aa).

As to quaternary structure, interacts with dil1.

This is an uncharacterized protein from Schizosaccharomyces pombe (strain 972 / ATCC 24843) (Fission yeast).